The chain runs to 218 residues: MGTPESSREPCPDRILDDVGGAFAMGAVGGSAYHLIRGIYNSPGGARLSGGVQALRMSGPRSGGSFSVWGGLYSTFDCALVYARQKEDPWNSILSGAATGGFLSLRQGLGASARSALVGGVLLAMIEGVGIMLNKVQSTAHNEQFMEDHAATSLPYGMGQISGQSVPVPETSSSSSGSVSWFGSLFKKKKETEDHHSESRTHILESFDAPPVPTYEFK.

4 helical membrane passes run 19–36, 66–82, 89–105, and 116–133; these read VGGA…YHLI, FSVW…ALVY, PWNS…FLSL, and ALVG…GIML.

It belongs to the Tim17/Tim22/Tim23 family. As to quaternary structure, component of the TIM17:23 complex at least composed of TIM23, TIM17 and TIM50. The complex interacts with the TIM44 component of the PAM complex. Expressed in flowers, leaves and cotyledons, and at very low levels in roots.

Its subcellular location is the mitochondrion inner membrane. Functionally, essential component of the TIM17:23 complex, a complex that mediates the translocation of transit peptide-containing proteins across the mitochondrial inner membrane. Links the inner and outer membranes. This is Mitochondrial import inner membrane translocase subunit TIM17-1 (TIM17-1) from Arabidopsis thaliana (Mouse-ear cress).